A 124-amino-acid polypeptide reads, in one-letter code: MKNKYLTLVALSGFFCVALGAFAAHGLSHILEAKALSWIDTGLEYQMFHTIAVLAVALSALRDNKFARLSMSSWLIGILLFSGSLYALAFEASNVIVWITPIGGTLFLIGWISLAYGSFKSKSL.

Transmembrane regions (helical) follow at residues 6 to 26 (LTLV…AAHG), 70 to 90 (SMSS…ALAF), and 95 to 115 (VIVW…ISLA).

The protein belongs to the UPF0382 family.

It is found in the cell membrane. The polypeptide is UPF0382 membrane protein HI_1073 (Haemophilus influenzae (strain ATCC 51907 / DSM 11121 / KW20 / Rd)).